The chain runs to 344 residues: Succinylglutamate desuccinylase (344 aa).

Zn(2+) is bound by residues His63, Glu66, and His160. Glu224 is a catalytic residue.

It belongs to the AspA/AstE family. Succinylglutamate desuccinylase subfamily. The cofactor is Zn(2+).

The enzyme catalyses N-succinyl-L-glutamate + H2O = L-glutamate + succinate. It functions in the pathway amino-acid degradation; L-arginine degradation via AST pathway; L-glutamate and succinate from L-arginine: step 5/5. Its function is as follows. Transforms N(2)-succinylglutamate into succinate and glutamate. This Shewanella baltica (strain OS223) protein is Succinylglutamate desuccinylase.